Consider the following 537-residue polypeptide: Zinc finger protein 703 (537 aa).

Disordered stretches follow at residues 1 to 38, 90 to 254, and 300 to 323; these read MNCS…LRQA, SQIG…VAPV, and VGNQ…LTGA. The span at 101-111 shows a compositional bias: polar residues; sequence SKLNSVTSSGL. Over residues 149–158 the composition is skewed to low complexity; it reads GSSSGGAADK. The segment covering 176–185 has biased composition (polar residues); that stretch reads SPSSRVSSPG. The span at 188–203 shows a compositional bias: basic and acidic residues; it reads CDSKNNESQEKKEPEA. A compositionally biased stretch (polar residues) spans 205–220; the sequence is KANSETSQVNPTLTRA. The segment covering 221–232 has biased composition (low complexity); sequence STSNSSAESSQS. A C2H2-type zinc finger spans residues 409 to 437; it reads HICNWVSASGPCDKRFSTSEELLAHLRTH.

It belongs to the Elbow/Noc family.

It localises to the nucleus. Its subcellular location is the cytoplasm. Functionally, transcriptional corepressor which does not bind directly to DNA and may regulate transcription through recruitment of histone deacetylases to gene promoters. Regulates cell adhesion, migration and proliferation. Involved in specification of the lateral neural plate border (NPB). May be required for segmental gene expression during hindbrain development. The polypeptide is Zinc finger protein 703 (znf703) (Xenopus tropicalis (Western clawed frog)).